A 353-amino-acid chain; its full sequence is Sphingosine 1-phosphate receptor 2 (353 aa).

Over 1-34 (MGSLYSEYLNPNKVQEHYNYTKETLETQETTSRQ) the chain is Extracellular. Asn-19 is a glycosylation site (N-linked (GlcNAc...) asparagine). Residues 35–59 (VASAFIVILCCAIVVENLLVLIAVA) traverse the membrane as a helical segment. Residues 60-66 (RNSKFHS) are Cytoplasmic-facing. Residues 67–95 (AMYLFLGNLAASDLLAGVAFVANTLLSGS) traverse the membrane as a helical segment. Residues 96–109 (VTLRLTPVQWFARE) are Extracellular-facing. A helical membrane pass occupies residues 110–128 (GSAFITLSASVFSLLAIAI). Topologically, residues 129-147 (ERHVAIAKVKLYGSDKSCR) are cytoplasmic. Residues 148-173 (MLLLIGASWLISLVLGGLPILGWNCL) traverse the membrane as a helical segment. The Extracellular portion of the chain corresponds to 174–189 (GHLEACSTVLPLYAKH). Residues 190–210 (YVLCVVTIFSIILLAIVALYV) form a helical membrane-spanning segment. Residues 211–233 (RIYCVVRSSHADMAAPQTLALLK) are Cytoplasmic-facing. A helical transmembrane segment spans residues 234 to 255 (TVTIVLGVFIVCWLPAFSILLL). Residues 256 to 271 (DYACPVHSCPILYKAH) are Extracellular-facing. A helical transmembrane segment spans residues 272-292 (YFFAVSTLNSLLNPVIYTWRS). Residues 293 to 353 (RDLRREVLRP…PTFLEGNTVV (61 aa)) are Cytoplasmic-facing. A lipid anchor (S-palmitoyl cysteine) is attached at Cys-305.

This sequence belongs to the G-protein coupled receptor 1 family.

It is found in the cell membrane. Functionally, receptor for the lysosphingolipid sphingosine 1-phosphate (S1P). S1P is a bioactive lysophospholipid that elicits diverse physiological effects on most types of cells and tissues. When expressed in rat HTC4 hepatoma cells, is capable of mediating S1P-induced cell proliferation and suppression of apoptosis. Receptor for the chemokine-like protein FAM19A5. Mediates the inhibitory effect of FAM19A5 on vascular smooth muscle cell proliferation and migration. In lymphoid follicles, couples the binding of S1P to the activation of GNA13 and downstream inhibition of AKT activation leading to suppression of germinal center (GC) B cell growth and migration outside the GC niche. The polypeptide is Sphingosine 1-phosphate receptor 2 (S1PR2) (Homo sapiens (Human)).